The sequence spans 455 residues: Histone chaperone RTT106 (455 aa).

Position 2 is an N-acetylserine (S2). Positions 2-67 are dimeric region; it reads SKLFLDELPE…SSDLLKTDEI (66 aa). 2 consecutive PH domains span residues 68-200 and 217-301; these read SETN…GFKI and INSF…VKRK. The interval 68 to 301 is double PH domain; sequence SETNTIFKLE…AKIDDYVKRK (234 aa). The span at 305 to 314 shows a compositional bias: basic and acidic residues; the sequence is DKSMSEELKA. The disordered stretch occupies residues 305–455; that stretch reads DKSMSEELKA…DEDGSGVEYD (151 aa). A compositionally biased stretch (polar residues) spans 319-339; sequence KGQATDGTADQPSILQEATRQ. 2 stretches are compositionally biased toward acidic residues: residues 350-366 and 376-395; these read SDDDEENDQNFEAESDL and DGAEDGEEAEEDDEEDDEEE. Residues 402-418 are compositionally biased toward polar residues; it reads ALNRDNSFASINGQPEQ. Residues S408 and S411 each carry the phosphoserine modification. Residues 420 to 429 show a composition bias toward basic and acidic residues; the sequence is LQYKEFKEPL. Over residues 430–455 the composition is skewed to acidic residues; sequence ELEDIPIEIDNDDDEDDEDGSGVEYD. S450 carries the post-translational modification Phosphoserine.

Belongs to the RTT106 family. Homodimers (via the N-terminal domain). Interacts with the SWI/SNF complex. Interacts with the RSC complex. Interacts with the HIR complex. Interacts with the CAF-1 complex. Interacts with RLF2. Interacts with SIR4. Interacts with YTA7. Interacts with CAC2. Interacts with HPC2. Interacts with HIR2. Interacts with MSI1. Interacts with HIR1. Interacts with histone H3. Interacts with histone H4.

It localises to the nucleus. The protein localises to the chromosome. Its function is as follows. Histones H3 and H4 chaperone involved in the nucleosome formation and heterochromatin silencing. Required for the deposition of H3K56ac-carrying H3-H4 complex onto newly-replicated DNA. Plays a role in the transcriptional regulation of the cell-cycle dependent histone genes by directly recruiting the SWI/SNF and RSC chromatin remodeling complexes to the histone genes in a cell cycle dependent manner. In cooperation with HIR and ASF1, creates a repressive structure at the core histone gene promoter and contributes to their repression outside of S phase. Involved in regulation of Ty1 transposition. The protein is Histone chaperone RTT106 of Saccharomyces cerevisiae (strain ATCC 204508 / S288c) (Baker's yeast).